We begin with the raw amino-acid sequence, 271 residues long: MHRRAAIQESDDEEDETYNDVVPESPSSCEDSKISKPTPKKRRNVEKRVVSVPIADVEGSKSRGEVYPPSDSWAWRKYGQKPIKGSPYPRGYYRCSSSKGCPARKQVERSRVDPSKLMITYACDHNHPFPSSSANTKSHHRSSVVLKTAKKEEEYEEEEEELTVTAAEEPPAGLDLSHVDSPLLLGGCYSEIGEFGWFYDASISSSSGSSNFLDVTLERGFSVGQEEDESLFGDLGDLPDCASVFRRGTVATEEQHRRCDFGAIPFCDSSR.

Disordered regions lie at residues 1–47 and 130–166; these read MHRR…NVEK and PSSS…TVTA. The segment covering 9 to 18 has biased composition (acidic residues); it reads ESDDEEDETY. Residues 64-130 constitute a DNA-binding region (WRKY); sequence GEVYPPSDSW…YACDHNHPFP (67 aa).

The protein belongs to the WRKY group II-e family.

It localises to the nucleus. Transcription factor. Interacts specifically with the W box (5'-(T)TGAC[CT]-3'), a frequently occurring elicitor-responsive cis-acting element. The protein is Probable WRKY transcription factor 69 (WRKY69) of Arabidopsis thaliana (Mouse-ear cress).